We begin with the raw amino-acid sequence, 323 residues long: Acetyl-coenzyme A carboxylase carboxyl transferase subunit alpha (323 aa).

A CoA carboxyltransferase C-terminal domain is found at 40–293 (LSEKSLQLTK…RKALSDSLKT (254 aa)).

Belongs to the AccA family. Acetyl-CoA carboxylase is a heterohexamer composed of biotin carboxyl carrier protein (AccB), biotin carboxylase (AccC) and two subunits each of ACCase subunit alpha (AccA) and ACCase subunit beta (AccD).

It is found in the cytoplasm. The enzyme catalyses N(6)-carboxybiotinyl-L-lysyl-[protein] + acetyl-CoA = N(6)-biotinyl-L-lysyl-[protein] + malonyl-CoA. It functions in the pathway lipid metabolism; malonyl-CoA biosynthesis; malonyl-CoA from acetyl-CoA: step 1/1. In terms of biological role, component of the acetyl coenzyme A carboxylase (ACC) complex. First, biotin carboxylase catalyzes the carboxylation of biotin on its carrier protein (BCCP) and then the CO(2) group is transferred by the carboxyltransferase to acetyl-CoA to form malonyl-CoA. The chain is Acetyl-coenzyme A carboxylase carboxyl transferase subunit alpha from Polynucleobacter asymbioticus (strain DSM 18221 / CIP 109841 / QLW-P1DMWA-1) (Polynucleobacter necessarius subsp. asymbioticus).